The sequence spans 568 residues: Urease subunit alpha (568 aa).

In terms of domain architecture, Urease spans 129–568; it reads GAIDSHIHFI…LPMAQRYFLF (440 aa). Ni(2+) is bound by residues histidine 134, histidine 136, and lysine 217. At lysine 217 the chain carries N6-carboxylysine. Histidine 219 provides a ligand contact to substrate. Ni(2+) is bound by residues histidine 246 and histidine 272. The Proton donor role is filled by histidine 320. Aspartate 360 is a binding site for Ni(2+).

Belongs to the metallo-dependent hydrolases superfamily. Urease alpha subunit family. As to quaternary structure, heterotrimer of UreA (gamma), UreB (beta) and UreC (alpha) subunits. Three heterotrimers associate to form the active enzyme. Ni cation serves as cofactor. Carboxylation allows a single lysine to coordinate two nickel ions.

The protein localises to the cytoplasm. It carries out the reaction urea + 2 H2O + H(+) = hydrogencarbonate + 2 NH4(+). It functions in the pathway nitrogen metabolism; urea degradation; CO(2) and NH(3) from urea (urease route): step 1/1. The polypeptide is Urease subunit alpha (Saccharophagus degradans (strain 2-40 / ATCC 43961 / DSM 17024)).